The sequence spans 128 residues: Thor profilin (128 aa).

Belongs to the Asgard profilin family.

It localises to the cytoplasm. It is found in the cytoskeleton. Its function is as follows. Has no profilin activity against rabbit actin. The chain is Thor profilin from Thorarchaeota archaeon (strain AB_25).